We begin with the raw amino-acid sequence, 333 residues long: Acyl-CoA wax alcohol acyltransferase 2 (333 aa).

The next 3 helical transmembrane spans lie at 15–35, 38–58, and 130–150; these read VFAV…VIAV, YLVV…WLAF, and IFPG…MPFL.

The protein belongs to the diacylglycerol acyltransferase family. Monomer. In terms of tissue distribution, highly expressed in skin, where it is primarily restricted to undifferentiated peripheral sebocytes. Also expressed at lower level in other tissues except pancreas.

The protein resides in the endoplasmic reticulum membrane. It carries out the reaction a long chain fatty alcohol + a fatty acyl-CoA = a wax ester + CoA. It catalyses the reaction all-trans-retinol + an acyl-CoA = an all-trans-retinyl ester + CoA. The catalysed reaction is an acyl-CoA + a 1,2-diacyl-sn-glycerol = a triacyl-sn-glycerol + CoA. The enzyme catalyses 11-cis-retinol + a fatty acyl-CoA = 11-cis-retinyl ester + CoA. It carries out the reaction 9-cis-retinol + a fatty acyl-CoA = 9-cis-retinyl ester + CoA. It catalyses the reaction 13-cis-retinol + a fatty acyl-CoA = 13-cis-retinyl ester + CoA. The catalysed reaction is a 1-acylglycerol + an acyl-CoA = a 1,2-diacylglycerol + CoA. The enzyme catalyses 1-O-alkylglycerol + an acyl-CoA = 1-O-alkyl-3-acylglycerol + CoA. It carries out the reaction a 2-acylglycerol + an acyl-CoA = a 1,2-diacyl-sn-glycerol + CoA. It catalyses the reaction 2-(9Z-octadecenoyl)-glycerol + hexadecanoyl-CoA = 1-hexadecanoyl-2-(9Z-octadecenoyl)-sn-glycerol + CoA. The catalysed reaction is 1,2-di-(9Z-octadecenoyl)-sn-glycerol + hexadecanoyl-CoA = 1,2-di-(9Z)-octadecenoyl-3-hexadecanoyl-sn-glycerol + CoA. The enzyme catalyses hexadecan-1-ol + hexadecanoyl-CoA = hexadecanyl hexadecanoate + CoA. It carries out the reaction hexadecane-1,2-diol + hexadecanoyl-CoA = 2-hydroxyhexadecyl hexadecanoate + CoA. It catalyses the reaction 9-cis-retinol + hexadecanoyl-CoA = 9-cis-retinyl hexadecanoate + CoA. The catalysed reaction is all-trans-retinol + hexadecanoyl-CoA = all-trans-retinyl hexadecanoate + CoA. The enzyme catalyses 1,2-di-(9Z-octadecenoyl)-sn-glycerol + (9Z)-octadecenoyl-CoA = 1,2,3-tri-(9Z-octadecenoyl)-glycerol + CoA. It carries out the reaction hexadecan-1-ol + (9Z)-octadecenoyl-CoA = hexadecanyl (9Z)-octadecenoate + CoA. It catalyses the reaction (9Z)-hexadecen-1-ol + (9Z)-octadecenoyl-CoA = 1-O-(9Z)-hexadecenyl (9Z)-octadecenoate + CoA. The catalysed reaction is octadecan-1-ol + (9Z)-octadecenoyl-CoA = 1-O-octadecyl (9Z)-octadecenoate + CoA. The enzyme catalyses (9Z)-octadecen-1-ol + (9Z)-octadecenoyl-CoA = 1-O-(9Z)-octadecenyl (9Z)-octadecenoate + CoA. It carries out the reaction hexadecan-1-ol + (9Z)-hexadecenoyl-CoA = 1-O-hexadecyl (9Z)-hexadecenoate + CoA. It catalyses the reaction hexadecan-1-ol + octadecanoyl-CoA = hexadecanyl octadecanoate + CoA. The catalysed reaction is 11-cis-retinol + hexadecanoyl-CoA = 11-cis-retinyl hexadecanoate + CoA. The enzyme catalyses 1-O-(9Z-octadecenyl)-glycerol + (9Z)-octadecenoyl-CoA = 1-O-(9Z-octadecyl)-3-(9Z-octadecenoyl)-glycerol + CoA. It carries out the reaction 1-(9Z-octadecenoyl)-glycerol + (9Z)-octadecenoyl-CoA = 1,2-di-(9Z-octadecenoyl)-glycerol + CoA. It catalyses the reaction 11-cis-retinol + tetradecanoyl-CoA = 11-cis-retinyl tetradecanoate + CoA. The catalysed reaction is 9-cis-retinol + tetradecanoyl-CoA = 9-cis-retinyl tetradecanoate + CoA. The enzyme catalyses 13-cis-retinol + tetradecanoyl-CoA = 13-cis-retinyl tetradecanoate + CoA. It carries out the reaction all-trans-retinol + tetradecanoyl-CoA = all-trans-retinyl tetradecanoate + CoA. It catalyses the reaction tetradecan-1-ol + tetradecanoyl-CoA = tetradecanyl tetradecanoate + CoA. With respect to regulation, 11-cis retinoids act as allosteric modulators of acyl-CoA retinol O-fatty-acyltransferase (ARAT) activity by suppressing esterification of 9-cis, 13-cis, or all-trans retinols concurrently increasing the enzyme specificity toward 11-cis isomer. Its function is as follows. Acyltransferase that catalyzes the formation of ester bonds between fatty alcohols and fatty acyl-CoAs to form wax monoesters. Shows a preference for medium chain acyl-CoAs from C12 to C16 in length and fatty alcohols shorter than C20, as the acyl donors and acceptors, respectively. Also possesses acyl-CoA retinol acyltransferase (ARAT) activity that preferentially esterifies 11-cis-retinol, a chromophore precursor of bleached opsin pigments in cone cells. Shows higher catalytic efficiency toward 11-cis-retinol versus 9-cis-retinol, 13-cis-retinol, and all-trans-retinol substrates. The chain is Acyl-CoA wax alcohol acyltransferase 2 (AWAT2) from Homo sapiens (Human).